Consider the following 360-residue polypeptide: Peptide chain release factor 1 (360 aa).

Gln-237 carries the N5-methylglutamine modification.

The protein belongs to the prokaryotic/mitochondrial release factor family. Methylated by PrmC. Methylation increases the termination efficiency of RF1.

It localises to the cytoplasm. Functionally, peptide chain release factor 1 directs the termination of translation in response to the peptide chain termination codons UAG and UAA. This Pseudomonas putida (strain ATCC 700007 / DSM 6899 / JCM 31910 / BCRC 17059 / LMG 24140 / F1) protein is Peptide chain release factor 1.